The sequence spans 670 residues: Oligopeptidase PepF (670 aa).

Residue His456 participates in Zn(2+) binding. The active site involves Glu457. The Zn(2+) site is built by His460 and His463.

This sequence belongs to the peptidase M3B family. It depends on Zn(2+) as a cofactor.

The protein resides in the cytoplasm. Its function is as follows. Overexpression results in inhibition of sporulation initiation. This sporulation deficiency could be the result of hydrolysis by PepF of the PhrA peptide, a phosphatase regulator. Thus, overexpression of PepF appears to act at the level of the phosphorelay, most likely through modulation of the negative role played by phosphatases. Overexpression of PepF also affects the activity of the competence and sporulation stimulating factor PhrC. This chain is Oligopeptidase PepF, found in Bacillus subtilis (strain 168).